A 456-amino-acid chain; its full sequence is Adenylosuccinate synthetase isozyme 2 (456 aa).

Positions 1–24 (MAFAETYPAASSLPNGDCGRPRAR) are disordered. Residues 39-45 (GDEGKGK) and 67-69 (GHT) contribute to the GTP site. Residue aspartate 40 is the Proton acceptor of the active site. Residues aspartate 40 and glycine 67 each coordinate Mg(2+). Aspartate 40 provides a ligand contact to substrate. Residues 40–43 (DEGK), 65–68 (NAGH), threonine 162, arginine 176, asparagine 255, threonine 270, and arginine 334 each bind IMP. Catalysis depends on histidine 68, which acts as the Proton donor. 330-336 (VTTGRKR) is a substrate binding site. GTP contacts are provided by residues arginine 336, 362–364 (KLD), and 444–447 (GVGK).

Belongs to the adenylosuccinate synthetase family. As to quaternary structure, homodimer. Requires Mg(2+) as cofactor.

It localises to the cytoplasm. It is found in the mitochondrion. It catalyses the reaction IMP + L-aspartate + GTP = N(6)-(1,2-dicarboxyethyl)-AMP + GDP + phosphate + 2 H(+). It participates in purine metabolism; AMP biosynthesis via de novo pathway; AMP from IMP: step 1/2. Inhibited competitively by AMP and IMP and non-competitively by fructose 1,6-bisphosphate. In terms of biological role, plays an important role in the de novo pathway and in the salvage pathway of purine nucleotide biosynthesis. Catalyzes the first committed step in the biosynthesis of AMP from IMP. The protein is Adenylosuccinate synthetase isozyme 2 of Homo sapiens (Human).